A 646-amino-acid chain; its full sequence is Nucleoside triphosphatase I (646 aa).

Residues 48 to 213 (FIGLKNLNSM…NNLIGLLRPN (166 aa)) enclose the Helicase ATP-binding domain. Residue 61–68 (WDTGMGKT) participates in ATP binding. The DEXH box signature appears at 151 to 154 (DEVH). In terms of domain architecture, Helicase C-terminal spans 377 to 540 (YIEACRIILN…KINVVFDLLK (164 aa)). The segment at 466 to 532 (DIIILDMPWN…DIIKDKQSKI (67 aa)) is binding to the cap-specific mRNA (nucleoside-2'-O-)-methyltransferase.

The protein belongs to the helicase family. NPH I subfamily. Monomer. Interacts (via C-terminus) with RAP94 (via N-terminus). Interacts with the cap-specific mRNA (nucleoside-2'-O-)-methyltransferase.

The protein resides in the virion. The enzyme catalyses a ribonucleoside 5'-triphosphate + H2O = a ribonucleoside 5'-diphosphate + phosphate + H(+). Its function is as follows. DNA-dependent ATPase required for providing the needed energy to achieve the termination of early transcripts. Acts in concert with the RAP94 subunit of the virion RNA polymerase and the capping enzyme/VTF to catalyze release of UUUUUNU-containing nascent RNA from the elongation complex. NPH-I must bind ssDNA in order to exhibit ATPase activity. In Heliothis armigera entomopoxvirus (HaEPV), this protein is Nucleoside triphosphatase I (NPH1).